The following is a 318-amino-acid chain: Serpentine receptor class delta-25 (318 aa).

The next 7 membrane-spanning stretches (helical) occupy residues 5-25 (LLHSVLSLVGILSNAFMMYLA), 38-58 (VVITIKTGTDILASSMSFFVM), 88-108 (HMFMLCFLEYDLVWLITSYLF), 126-146 (IAFYVFIPSMVHMGVWISIYI), 176-196 (ITLLTQLFITACLAVVAYTFI), 226-246 (TFKLILPSFIFLGITVFVAMF), and 258-278 (IVSVCFMFSPVCSPYAYIIFV).

Belongs to the nematode receptor-like protein srd family.

It localises to the membrane. The sequence is that of Serpentine receptor class delta-25 (srd-25) from Caenorhabditis elegans.